A 514-amino-acid polypeptide reads, in one-letter code: Extracellular exo-inulinase inuE (514 aa).

An N-terminal signal peptide occupies residues 1–18 (MRAFLALIFLTFVMNVES). Substrate contacts are provided by residues 33-34 (ND) and Gln52. Catalysis depends on Asp34, which acts as the Nucleophile. An N-linked (GlcNAc...) asparagine glycan is attached at Asn56. 2 residues coordinate substrate: Trp60 and Ser95. Asn104 and Asn110 each carry an N-linked (GlcNAc...) asparagine glycan. 162-163 (RD) is a substrate binding site. N-linked (GlcNAc...) asparagine glycans are attached at residues Asn197 and Asn203. The substrate site is built by Glu214 and Trp300. The Proton donor/acceptor role is filled by Glu214. N-linked (GlcNAc...) asparagine glycosylation is found at Asn357, Asn371, Asn389, and Asn422.

Belongs to the glycosyl hydrolase 32 family.

The protein resides in the secreted. The catalysed reaction is Hydrolysis of terminal, non-reducing (2-&gt;1)- and (2-&gt;6)-linked beta-D-fructofuranose residues in fructans.. Functionally, exo-inulinase involved in utilization of the plant storage polymer inulin, consisting of fructooligosaccharides with a degree of polymerization (DP) value from 2 to 60. Splits off terminal fructose units successively from the non-reducing end of the inulin molecule. The chain is Extracellular exo-inulinase inuE from Meyerozyma guilliermondii (Yeast).